The sequence spans 100 residues: Large ribosomal subunit protein uL23 (100 aa).

It belongs to the universal ribosomal protein uL23 family. Part of the 50S ribosomal subunit. Contacts protein L29, and trigger factor when it is bound to the ribosome.

In terms of biological role, one of the early assembly proteins it binds 23S rRNA. One of the proteins that surrounds the polypeptide exit tunnel on the outside of the ribosome. Forms the main docking site for trigger factor binding to the ribosome. In Dechloromonas aromatica (strain RCB), this protein is Large ribosomal subunit protein uL23.